Consider the following 414-residue polypeptide: DNA polymerase IV 1 (414 aa).

Positions 8–189 constitute a UmuC domain; sequence IFHIDMNSFY…LPVGEMHGVG (182 aa). Residues Asp-12 and Asp-108 each coordinate Mg(2+). The active site involves Glu-109. The tract at residues 391 to 414 is disordered; the sequence is LKKEESKTKGTSFNKDFFQDEKKS.

It belongs to the DNA polymerase type-Y family. In terms of assembly, monomer. It depends on Mg(2+) as a cofactor.

The protein localises to the cytoplasm. It carries out the reaction DNA(n) + a 2'-deoxyribonucleoside 5'-triphosphate = DNA(n+1) + diphosphate. In terms of biological role, poorly processive, error-prone DNA polymerase involved in untargeted mutagenesis. Copies undamaged DNA at stalled replication forks, which arise in vivo from mismatched or misaligned primer ends. These misaligned primers can be extended by PolIV. Exhibits no 3'-5' exonuclease (proofreading) activity. May be involved in translesion synthesis (TSL), in conjunction with the beta clamp from PolIII. This Bacillus subtilis (strain 168) protein is DNA polymerase IV 1 (dinB1).